Here is a 294-residue protein sequence, read N- to C-terminus: Cutinase (294 aa).

The N-terminal stretch at 1-33 (MLRARPSHRLASAAAVVAATGAALLAGSSPAAA) is a signal peptide. Cysteines 36 and 107 form a disulfide. Residue Ser-118 is the Nucleophile of the active site. A disulfide bond links Cys-180 and Cys-187. Asp-184 is an active-site residue. His-198 (proton donor/acceptor) is an active-site residue. Residues 222 to 241 (GTPTTPTPTPTPTPVPTTCV) are disordered. The segment covering 226–236 (TPTPTPTPTPV) has biased composition (pro residues). The may be involved in substrate binding stretch occupies residues 240 to 294 (CVRDSTRDHVAADRAVSLYGRAYARGSRDSLGATSSYNVVSLQQVEGGWRLVTAC).

The protein belongs to the cutinase family.

It localises to the secreted. The catalysed reaction is cutin + H2O = cutin monomers.. The enzyme catalyses a tetradecanoate ester + H2O = an aliphatic alcohol + tetradecanoate + H(+). It catalyses the reaction hexadecanoate ester + H2O = an aliphatic alcohol + hexadecanoate + H(+). It carries out the reaction a butanoate ester + H2O = an aliphatic alcohol + butanoate + H(+). The catalysed reaction is an octanoate ester + H2O = an aliphatic alcohol + octanoate + H(+). Catalyzes the hydrolysis of cutin, a polyester that forms the structure of plant cuticle. Shows esterase activity towards p-nitrophenol-linked aliphatic esters (pNP-aliphatic esters). Can depolymerize synthetic polyesters such as poly(epsilon-caprolactone) (PCL) and poly(1,3-propylene adipate) (PPA). Exhibits some activity on poly(lactic acid) (PLA). Can bind but not hydrolyze poly(hydroxybutyrate) (PHB). This chain is Cutinase, found in Kineococcus radiotolerans (strain ATCC BAA-149 / DSM 14245 / SRS30216).